Reading from the N-terminus, the 604-residue chain is FAD-linked oxidoreductase easE (604 aa).

A signal peptide spans 1-25 (MQFLLWSTGLVALLSWLIYTQETQS). N-linked (GlcNAc...) asparagine glycans are attached at residues N47, N70, N106, and N196. The region spanning 125 to 308 (QGRIPLFTVG…TRATMRVFPD (184 aa)) is the FAD-binding PCMH-type domain.

Belongs to the oxygen-dependent FAD-linked oxidoreductase family. The cofactor is FAD.

It participates in alkaloid biosynthesis; ergot alkaloid biosynthesis. Functionally, FAD-linked oxidoreductase; part of the gene cluster that mediates the biosynthesis of fungal ergot alkaloid. DmaW catalyzes the first step of ergot alkaloid biosynthesis by condensing dimethylallyl diphosphate (DMAP) and tryptophan to form 4-dimethylallyl-L-tryptophan. The second step is catalyzed by the methyltransferase easF that methylates 4-dimethylallyl-L-tryptophan in the presence of S-adenosyl-L-methionine, resulting in the formation of 4-dimethylallyl-L-abrine. The catalase easC and the FAD-dependent oxidoreductase easE then transform 4-dimethylallyl-L-abrine to chanoclavine-I which is further oxidized by easD in the presence of NAD(+), resulting in the formation of chanoclavine-I aldehyde. Chanoclavine-I aldehyde is the precursor of ergoamides and ergopeptines in Clavicipitaceae, and clavine-type alcaloids such as fumiclavine in Trichocomaceae. However, the metabolites downstream of chanoclavine-I aldehyde in Arthrodermataceae have not been identified yet. This Trichophyton verrucosum (strain HKI 0517) protein is FAD-linked oxidoreductase easE.